The primary structure comprises 89 residues: Bacterial microcompartment shell vertex protein GrpN (89 aa).

The BMV domain occupies 1–83; the sequence is MYLGKVIGTV…IDAAVVGIVD (83 aa).

Belongs to the CcmL/EutN family. In terms of assembly, homopentamer with a small central pore.

Its subcellular location is the bacterial microcompartment. In terms of biological role, probably forms vertices in the bacterial microcompartment (BMC) predicted to be involved in glycyl radical-based 1,2-propanediol metabolism in this organism. The protein is Bacterial microcompartment shell vertex protein GrpN of Rhodospirillum rubrum (strain F11).